The sequence spans 268 residues: Taurine import ATP-binding protein TauB (268 aa).

Positions 4–236 constitute an ABC transporter domain; sequence LAIRNISMRF…EGVDADLREV (233 aa). Residue 41-48 participates in ATP binding; it reads GPSGCGKT.

This sequence belongs to the ABC transporter superfamily. Taurine importer (TC 3.A.1.17.1) family. In terms of assembly, the complex is composed of two ATP-binding proteins (TauB), two transmembrane proteins (TauC) and a solute-binding protein (TauA).

The protein resides in the cell inner membrane. The catalysed reaction is taurine(out) + ATP + H2O = taurine(in) + ADP + phosphate + H(+). In terms of biological role, part of the ABC transporter complex TauABC involved in taurine import. Responsible for energy coupling to the transport system. This Jannaschia sp. (strain CCS1) protein is Taurine import ATP-binding protein TauB.